Consider the following 490-residue polypeptide: Bifunctional protein HldE (490 aa).

The tract at residues 1-330 is ribokinase; it reads MERKNVESLF…GSMGFQHSDS (330 aa). 205-208 is an ATP binding site; that stretch reads NRKE. The active site involves Asp-275. The segment at 356–490 is cytidylyltransferase; the sequence is FTNGCFDLLH…DKILRAYGEE (135 aa).

This sequence in the N-terminal section; belongs to the carbohydrate kinase PfkB family. It in the C-terminal section; belongs to the cytidylyltransferase family. As to quaternary structure, homodimer.

It catalyses the reaction D-glycero-beta-D-manno-heptose 7-phosphate + ATP = D-glycero-beta-D-manno-heptose 1,7-bisphosphate + ADP + H(+). The catalysed reaction is D-glycero-beta-D-manno-heptose 1-phosphate + ATP + H(+) = ADP-D-glycero-beta-D-manno-heptose + diphosphate. Its pathway is nucleotide-sugar biosynthesis; ADP-L-glycero-beta-D-manno-heptose biosynthesis; ADP-L-glycero-beta-D-manno-heptose from D-glycero-beta-D-manno-heptose 7-phosphate: step 1/4. It functions in the pathway nucleotide-sugar biosynthesis; ADP-L-glycero-beta-D-manno-heptose biosynthesis; ADP-L-glycero-beta-D-manno-heptose from D-glycero-beta-D-manno-heptose 7-phosphate: step 3/4. In terms of biological role, catalyzes the phosphorylation of D-glycero-D-manno-heptose 7-phosphate at the C-1 position to selectively form D-glycero-beta-D-manno-heptose-1,7-bisphosphate. Functionally, catalyzes the ADP transfer from ATP to D-glycero-beta-D-manno-heptose 1-phosphate, yielding ADP-D-glycero-beta-D-manno-heptose. The polypeptide is Bifunctional protein HldE (Geobacter metallireducens (strain ATCC 53774 / DSM 7210 / GS-15)).